A 307-amino-acid chain; its full sequence is Lactamase-like protein vrtG (307 aa).

Residues His97, His99, Asp101, and His102 each contribute to the Zn(2+) site. Catalysis depends on Asp101, which acts as the Proton donor/acceptor.

Belongs to the metallo-beta-lactamase superfamily. The cofactor is Zn(2+).

It functions in the pathway secondary metabolite biosynthesis; terpenoid biosynthesis. Lactamase-like protein; part of the gene cluster that mediates the biosynthesis of viridicatumtoxin, a tetracycline-like fungal meroterpenoid with a unique, fused spirobicyclic ring system. The first step of the pathway is the production of the malonamoyl-CoA starter unit for the polyketide synthase vrtA. The aldolase vrtJ may be involved in the synthesis of the malonamate substrate for malonamoyl-CoA synthetase vrtB. The polyketide synthase vrtA then may utilize the malonamoyl-CoA starter unit, followed by sequential condensation of eight malonyl-CoA units to form the polyketide backbone. The cyclization of the last ring could be mediated by the lactamase-like protein vrtG. The proposed post-PKS tailoring steps are a hydroxylation at C5 catalyzed the cytochrome P450 monooxygenase vrtE, a hydroxylation at C12a catalyzed by VrtH and/or VrtI, and an O-methylation by the O-methyltransferase vrtF. VrtC is then proposed to catalyze the transfer of a geranyl group synthesized by vrtD to the aromatic C ring of the tetracyclic polyketide intermediate of viridicatumtoxin to yield previridicatumtoxin. Finally, the cytochrome P450 monooxygenase vrtK catalyzes the spirocyclization of the geranyl moiety of previridicatumtoxin to afford viridicatumtoxin. This is Lactamase-like protein vrtG from Penicillium aethiopicum.